Here is an 873-residue protein sequence, read N- to C-terminus: MASRRKSTTPCMVLASEQDPDLELISDLDEGPPVLTPVENSRAESISSDEEVHESVDSDNQQNKKVEGGYECKYCTFQTPDLNMFTFHVDSEHPNVVLNSSYVCVECNFLTKRYDALSEHNLKYHPGEENFKLTMVKRNNQTIFEQTINDLTFDGSFVKEENAEQAESTEVSSSGISISKTPIMKMMKNKVENKRIAVHHNSVEDVPEEKENEIKPDREEIVENPSSSASESNTSTSIVNRIHPSTASTVVTPAAVLPGLAQVITAVSAQQNSNLIPKVLIPVNSIPTYNAALDNNPLLLNTYNKFPYPTMSEITVLSAQAKYTEEQIKIWFSAQRLKHGVSWTPEEVEEARRKQFNGTVHTVPQTITVIPTHISTGSNGLPSILQTCQIVGQPGLVLTQVAGTNTLPVTAPIALTVAGIPSQNNVQKSQVPAAQPTAETKPATAAVPTSQSVKHETALVNPDSFGIRAKKTKEQLAELKVSYLKNQFPHDSEIIRLMKITGLTKGEIKKWFSDTRYNQRNSKSNQCLHLNNDSSTTIIIDSSDETTESPTVGTAQPKQSWNPFPDFTPQKFKEKTAEQLRVLQASFLNSSVLTDEELNRLRAQTKLTRREIDAWFTEKKKSKALKEEKMEIDESNAGSSKEEAGETSPGDESGAPKSGSTGKICKKTPEQLHMLKSAFVRTQWPSPEEYDKLAKESGLARTDIVSWFGDTRYAWKNGNLKWYYYYQSANSSSMNGLSSLRKRGRGRPKGRGRGRPRGRPRGSKRINNWDRGPSLIKFKTGTAILKDYYLKHKFLNEQDLDELVNKSHMGYEQVREWFAERQRRSELGIELFEENEEEDEVIDDQEEDEEETDDSDTWEPPRHVKRKLSKSDD.

Residues 1 to 63 form a disordered region; the sequence is MASRRKSTTP…ESVDSDNQQN (63 aa). Acidic residues predominate over residues 18–30; sequence QDPDLELISDLDE. Position 36 is a phosphothreonine (threonine 36). Serine 45, serine 47, and serine 48 each carry phosphoserine. 2 C2H2-type zinc fingers span residues 70–93 and 102–125; these read YECK…DSEH and YVCV…LKYH. A Glycyl lysine isopeptide (Lys-Gly) (interchain with G-Cter in SUMO2) cross-link involves residue lysine 159. A Phosphoserine modification is found at serine 202. Residues 202-236 are disordered; sequence SVEDVPEEKENEIKPDREEIVENPSSSASESNTST. A compositionally biased stretch (basic and acidic residues) spans 212–221; the sequence is NEIKPDREEI. Low complexity predominate over residues 223 to 236; that stretch reads ENPSSSASESNTST. Positions 272–432 are required for dimerization; sequence NSNLIPKVLI…QNNVQKSQVP (161 aa). The tract at residues 272–564 is required for interaction with NFYA; it reads NSNLIPKVLI…AQPKQSWNPF (293 aa). The segment at residues 284-346 is a DNA-binding region (homeobox 1); it reads NSIPTYNAAL…LKHGVSWTPE (63 aa). Glycyl lysine isopeptide (Lys-Gly) (interchain with G-Cter in SUMO2) cross-links involve residues lysine 441, lysine 454, lysine 485, and lysine 629. 2 DNA-binding regions (homeobox) span residues 464–526 and 569–630; these read SFGI…KSNQ and PQKF…EEKM. Disordered stretches follow at residues 626-667 and 732-769; these read KEEK…ICKK and SSMN…INNW. The residue at position 648 (serine 648) is a Phosphoserine. The homeobox 4 DNA-binding region spans 660 to 722; it reads STGKICKKTP…YAWKNGNLKW (63 aa). The tract at residues 734 to 768 is required for nuclear localization; sequence MNGLSSLRKRGRGRPKGRGRGRPRGRPRGSKRINN. The segment covering 740–764 has biased composition (basic residues); sequence LRKRGRGRPKGRGRGRPRGRPRGSK. Serine 774 carries the post-translational modification Phosphoserine. Positions 777–832 form a DNA-binding region, homeobox 5; that stretch reads KFKTGTAILKDYYLKHKFLNEQDLDELVNKSHMGYEQVREWFAERQRRSELGIELF. A disordered region spans residues 829–873; the sequence is IELFEENEEEDEVIDDQEEDEEETDDSDTWEPPRHVKRKLSKSDD. A compositionally biased stretch (acidic residues) spans 831–857; it reads LFEENEEEDEVIDDQEEDEEETDDSDT. The required for repressor activity stretch occupies residues 831–873; that stretch reads LFEENEEEDEVIDDQEEDEEETDDSDTWEPPRHVKRKLSKSDD. Residues 863 to 873 are compositionally biased toward basic residues; it reads HVKRKLSKSDD.

The protein belongs to the ZHX family. Forms homodimers. Also forms heterodimers with ZHX3 which is a prerequisite for repressor activity and with ZHX2. Interacts with NFYA. Interacts with ATF7IP.

It localises to the nucleus. Its function is as follows. Acts as a transcriptional repressor. This chain is Zinc fingers and homeoboxes protein 1 (ZHX1), found in Gorilla gorilla gorilla (Western lowland gorilla).